A 312-amino-acid chain; its full sequence is MSSAPPAPRVIAVVGPTAAGKSDLGVFLAQRLGGEVVNADSMQLYRGMDIGTAKLTPEERGGVPHHLLDIWDVTVTASVAEYQRLARERIDALLAEGRWPILVGGSGLYVRGAVDNLEFPGTDPGIRARLEEELELRGPGALHARLAVADPEAARAILPSNGRRIVRALEVIEITGRPFTANLPGHDSVYDTVQIGVDVARPELHERIALRVDRMWEAGLVDEVRALEAQGLREGRTASRALGYQQVLAALAGECTLDEARAETVRATKRFARRQDSWFRRDPRVHWLSGGVADRTELPRLALSLVERPVTA.

Residue 15–22 participates in ATP binding; that stretch reads GPTAAGKS. 17-22 contributes to the substrate binding site; the sequence is TAAGKS. The interval 40 to 43 is interaction with substrate tRNA; the sequence is DSMQ.

This sequence belongs to the IPP transferase family. In terms of assembly, monomer. Requires Mg(2+) as cofactor.

The enzyme catalyses adenosine(37) in tRNA + dimethylallyl diphosphate = N(6)-dimethylallyladenosine(37) in tRNA + diphosphate. Functionally, catalyzes the transfer of a dimethylallyl group onto the adenine at position 37 in tRNAs that read codons beginning with uridine, leading to the formation of N6-(dimethylallyl)adenosine (i(6)A). This chain is tRNA dimethylallyltransferase, found in Streptomyces coelicolor (strain ATCC BAA-471 / A3(2) / M145).